We begin with the raw amino-acid sequence, 396 residues long: S-arrestin (396 aa).

This sequence belongs to the arrestin family.

Arrestin is one of the major proteins of the ros (retinal rod outer segments); it binds to photoactivated-phosphorylated rhodopsin, thereby apparently preventing the transducin-mediated activation of phosphodiesterase. The polypeptide is S-arrestin (Aquarana catesbeiana (American bullfrog)).